We begin with the raw amino-acid sequence, 78 residues long: Large ribosomal subunit protein bL28 (78 aa).

This sequence belongs to the bacterial ribosomal protein bL28 family.

In Prochlorococcus marinus (strain MIT 9215), this protein is Large ribosomal subunit protein bL28.